A 311-amino-acid polypeptide reads, in one-letter code: Porphobilinogen deaminase (311 aa).

Residue Cys-242 is modified to S-(dipyrrolylmethanemethyl)cysteine.

Belongs to the HMBS family. As to quaternary structure, monomer. Dipyrromethane serves as cofactor.

It catalyses the reaction 4 porphobilinogen + H2O = hydroxymethylbilane + 4 NH4(+). Its pathway is porphyrin-containing compound metabolism; protoporphyrin-IX biosynthesis; coproporphyrinogen-III from 5-aminolevulinate: step 2/4. Tetrapolymerization of the monopyrrole PBG into the hydroxymethylbilane pre-uroporphyrinogen in several discrete steps. This is Porphobilinogen deaminase from Baumannia cicadellinicola subsp. Homalodisca coagulata.